The primary structure comprises 1354 residues: Phosphoribosylformylglycinamidine synthase (1354 aa).

ATP contacts are provided by residues 327–338 (GATTGTGGRLRD), 407–409 (SGF), and A714. Residues D715, E754, N758, and D918 each contribute to the Mg(2+) site. S920 provides a ligand contact to ATP. The 251-residue stretch at 1087–1337 (VAVLREEGVN…EVSPTQSESP (251 aa)) folds into the Glutamine amidotransferase type-1 domain. The active-site Nucleophile is the C1180. Residues H1310 and E1312 contribute to the active site.

The protein in the N-terminal section; belongs to the FGAMS family.

It carries out the reaction N(2)-formyl-N(1)-(5-phospho-beta-D-ribosyl)glycinamide + L-glutamine + ATP + H2O = 2-formamido-N(1)-(5-O-phospho-beta-D-ribosyl)acetamidine + L-glutamate + ADP + phosphate + H(+). It participates in purine metabolism; IMP biosynthesis via de novo pathway; 5-amino-1-(5-phospho-D-ribosyl)imidazole from N(2)-formyl-N(1)-(5-phospho-D-ribosyl)glycinamide: step 1/2. In terms of biological role, phosphoribosylformylglycinamidine synthase involved in the purines biosynthetic pathway. Catalyzes the ATP-dependent conversion of formylglycinamide ribonucleotide (FGAR) and glutamine to yield formylglycinamidine ribonucleotide (FGAM) and glutamate. Because of its role in metabolisms, is involved in sleep regulation. The chain is Phosphoribosylformylglycinamidine synthase from Drosophila melanogaster (Fruit fly).